The primary structure comprises 280 residues: Bis(5'-nucleosyl)-tetraphosphatase, symmetrical (280 aa).

It belongs to the Ap4A hydrolase family.

It catalyses the reaction P(1),P(4)-bis(5'-adenosyl) tetraphosphate + H2O = 2 ADP + 2 H(+). In terms of biological role, hydrolyzes diadenosine 5',5'''-P1,P4-tetraphosphate to yield ADP. The protein is Bis(5'-nucleosyl)-tetraphosphatase, symmetrical of Escherichia coli O17:K52:H18 (strain UMN026 / ExPEC).